The following is a 453-amino-acid chain: Tubulin alpha-2 chain (453 aa).

Glutamine 11 contributes to the GTP binding site. Lysine 40 carries the N6-acetyllysine modification. Positions 71, 144, 145, 179, 206, and 228 each coordinate GTP. Glutamate 71 serves as a coordination point for Mg(2+). Glutamate 254 is an active-site residue. The segment at 432–453 is disordered; sequence YEEVGAETAEGEGEEEDFGEEY.

Belongs to the tubulin family. As to quaternary structure, dimer of alpha and beta chains. A typical microtubule is a hollow water-filled tube with an outer diameter of 25 nm and an inner diameter of 15 nM. Alpha-beta heterodimers associate head-to-tail to form protofilaments running lengthwise along the microtubule wall with the beta-tubulin subunit facing the microtubule plus end conferring a structural polarity. Microtubules usually have 13 protofilaments but different protofilament numbers can be found in some organisms and specialized cells. Mg(2+) is required as a cofactor. Post-translationally, undergoes a tyrosination/detyrosination cycle, the cyclic removal and re-addition of a C-terminal tyrosine residue by the enzymes tubulin tyrosine carboxypeptidase (TTCP) and tubulin tyrosine ligase (TTL), respectively. In terms of processing, acetylation of alpha chains at Lys-40 stabilizes microtubules and affects affinity and processivity of microtubule motors. This modification has a role in multiple cellular functions, ranging from cell motility, cell cycle progression or cell differentiation to intracellular trafficking and signaling.

It localises to the cytoplasm. The protein resides in the cytoskeleton. The catalysed reaction is GTP + H2O = GDP + phosphate + H(+). Tubulin is the major constituent of microtubules, a cylinder consisting of laterally associated linear protofilaments composed of alpha- and beta-tubulin heterodimers. Microtubules grow by the addition of GTP-tubulin dimers to the microtubule end, where a stabilizing cap forms. Below the cap, tubulin dimers are in GDP-bound state, owing to GTPase activity of alpha-tubulin. This Pelvetia fastigiata (Brown alga) protein is Tubulin alpha-2 chain (TUBA2).